The following is a 214-amino-acid chain: Cell division protein DamX (214 aa).

2 stretches are compositionally biased toward polar residues: residues 1 to 14 (GSGTPTEAQTQPQQ) and 43 to 53 (QGMTGAASTLP). The segment at 1–133 (GSGTPTEAQT…SVQSAPGSHY (133 aa)) is disordered. The helical transmembrane segment at 44–65 (GMTGAASTLPTAPATVMSGAAA) threads the bilayer. 2 stretches are compositionally biased toward low complexity: residues 78–97 (QQHKTPAKTAAAKPTATQHK) and 110–131 (SSTAKAGAVASSGSSVQSAPGS). The region spanning 127–204 (SAPGSHYTLQ…VQAKKPWVRP (78 aa)) is the SPOR domain.

This sequence belongs to the DamX family.

It is found in the cell inner membrane. Functionally, non-essential cell division protein. The protein is Cell division protein DamX of Serratia marcescens.